The following is a 157-amino-acid chain: Protein Smg (157 aa).

It belongs to the Smg family.

The chain is Protein Smg from Buchnera aphidicola subsp. Acyrthosiphon pisum (strain Tuc7).